We begin with the raw amino-acid sequence, 442 residues long: Histidinol dehydrogenase (442 aa).

NAD(+)-binding residues include tyrosine 138, glutamine 199, and asparagine 222. 3 residues coordinate substrate: serine 245, glutamine 267, and histidine 270. Positions 267 and 270 each coordinate Zn(2+). Active-site proton acceptor residues include glutamate 335 and histidine 336. Histidine 336, aspartate 369, glutamate 423, and histidine 428 together coordinate substrate. Aspartate 369 is a Zn(2+) binding site. Residue histidine 428 coordinates Zn(2+).

The protein belongs to the histidinol dehydrogenase family. Zn(2+) is required as a cofactor.

The enzyme catalyses L-histidinol + 2 NAD(+) + H2O = L-histidine + 2 NADH + 3 H(+). It functions in the pathway amino-acid biosynthesis; L-histidine biosynthesis; L-histidine from 5-phospho-alpha-D-ribose 1-diphosphate: step 9/9. Its function is as follows. Catalyzes the sequential NAD-dependent oxidations of L-histidinol to L-histidinaldehyde and then to L-histidine. This chain is Histidinol dehydrogenase, found in Ralstonia nicotianae (strain ATCC BAA-1114 / GMI1000) (Ralstonia solanacearum).